We begin with the raw amino-acid sequence, 256 residues long: Ribosomal RNA small subunit methyltransferase J (256 aa).

S-adenosyl-L-methionine contacts are provided by residues 104–105 (RD), 120–121 (ER), 156–157 (SS), and aspartate 174.

This sequence belongs to the methyltransferase superfamily. RsmJ family.

Its subcellular location is the cytoplasm. It catalyses the reaction guanosine(1516) in 16S rRNA + S-adenosyl-L-methionine = N(2)-methylguanosine(1516) in 16S rRNA + S-adenosyl-L-homocysteine + H(+). Its function is as follows. Specifically methylates the guanosine in position 1516 of 16S rRNA. This chain is Ribosomal RNA small subunit methyltransferase J, found in Yersinia pseudotuberculosis serotype O:1b (strain IP 31758).